The chain runs to 84 residues: Subtilisin-chymotrypsin inhibitor-2A (84 aa).

The tract at residues 1-23 is disordered; the sequence is MSSVEKKPEGVNTGAGDRHNLKT.

It belongs to the protease inhibitor I13 (potato type I serine protease inhibitor) family.

In terms of biological role, inhibits both subtilisin and chymotrypsin. The polypeptide is Subtilisin-chymotrypsin inhibitor-2A (Hordeum vulgare (Barley)).